The chain runs to 153 residues: Acylphosphatase-like protein MJ0553 (153 aa).

The Acylphosphatase-like domain maps to 4 to 102 (TYELIIYGRV…SRLSSDDILE (99 aa)).

This chain is Acylphosphatase-like protein MJ0553, found in Methanocaldococcus jannaschii (strain ATCC 43067 / DSM 2661 / JAL-1 / JCM 10045 / NBRC 100440) (Methanococcus jannaschii).